The sequence spans 234 residues: Probable septum site-determining protein MinC (234 aa).

Belongs to the MinC family. As to quaternary structure, interacts with MinD and FtsZ.

Cell division inhibitor that blocks the formation of polar Z ring septums. Rapidly oscillates between the poles of the cell to destabilize FtsZ filaments that have formed before they mature into polar Z rings. Prevents FtsZ polymerization. In Pseudoalteromonas translucida (strain TAC 125), this protein is Probable septum site-determining protein MinC.